The primary structure comprises 172 residues: Ribosome maturation factor RimM (172 aa).

Residues 95 to 168 (AEGEFYYHQI…RVDVEIMEGL (74 aa)) form the PRC barrel domain.

It belongs to the RimM family. In terms of assembly, binds ribosomal protein uS19.

It is found in the cytoplasm. An accessory protein needed during the final step in the assembly of 30S ribosomal subunit, possibly for assembly of the head region. Essential for efficient processing of 16S rRNA. May be needed both before and after RbfA during the maturation of 16S rRNA. It has affinity for free ribosomal 30S subunits but not for 70S ribosomes. The sequence is that of Ribosome maturation factor RimM from Streptococcus equi subsp. zooepidemicus (strain H70).